The following is a 230-amino-acid chain: Ribonuclease 3 (230 aa).

The region spanning 10-133 is the RNase III domain; sequence DPRLLSRIGY…IIGAIYLDSS (124 aa). Glutamate 46 contributes to the Mg(2+) binding site. Residue aspartate 50 is part of the active site. Residues aspartate 119 and glutamate 122 each coordinate Mg(2+). Residue glutamate 122 is part of the active site. The region spanning 161–230 is the DRBM domain; that stretch reads DPKSRLQEYL…AAEILKLLEQ (70 aa).

Belongs to the ribonuclease III family. Homodimer. It depends on Mg(2+) as a cofactor.

It localises to the cytoplasm. It catalyses the reaction Endonucleolytic cleavage to 5'-phosphomonoester.. Functionally, digests double-stranded RNA. Involved in the processing of primary rRNA transcript to yield the immediate precursors to the large and small rRNAs (23S and 16S). Processes some mRNAs, and tRNAs when they are encoded in the rRNA operon. Processes pre-crRNA and tracrRNA of type II CRISPR loci if present in the organism. This is Ribonuclease 3 (rnc) from Acinetobacter baumannii (strain AB307-0294).